The following is a 236-amino-acid chain: Thiamine import ATP-binding protein ThiQ (236 aa).

In terms of domain architecture, ABC transporter spans 2 to 230; it reads LKLEKITYLY…SAAKASVLGI (229 aa). 32–39 lines the ATP pocket; that stretch reads GPSGAGKS.

It belongs to the ABC transporter superfamily. Thiamine importer (TC 3.A.1.19.1) family. The complex is composed of two ATP-binding proteins (ThiQ), two transmembrane proteins (ThiP) and a solute-binding protein (ThiB).

Its subcellular location is the cell inner membrane. It catalyses the reaction thiamine(out) + ATP + H2O = thiamine(in) + ADP + phosphate + H(+). In terms of biological role, part of the ABC transporter complex ThiBPQ involved in thiamine import. Responsible for energy coupling to the transport system. In Yersinia pseudotuberculosis serotype I (strain IP32953), this protein is Thiamine import ATP-binding protein ThiQ.